The sequence spans 365 residues: Ferredoxin--NADP reductase, chloroplastic (365 aa).

The segment at 1 to 22 (MAAAVTAAVSFPSTKSTPLSTR) is disordered. The span at 11–22 (FPSTKSTPLSTR) shows a compositional bias: polar residues. Positions 86-208 (KNPYTGRCLL…TGPVGKEMLM (123 aa)) constitute an FAD-binding FR-type domain. FAD-binding positions include 144–147 (RLYS), 165–167 (CVK), Y171, 182–184 (VCS), and T223. 2 residues coordinate NADP(+): S147 and K167. NADP(+) is bound by residues T223, 255–256 (VP), 285–286 (SR), K295, 324–325 (GL), and E363.

The protein belongs to the ferredoxin--NADP reductase type 1 family. The cofactor is FAD.

The protein resides in the plastid. It is found in the chloroplast stroma. Its subcellular location is the chloroplast thylakoid membrane. The catalysed reaction is 2 reduced [2Fe-2S]-[ferredoxin] + NADP(+) + H(+) = 2 oxidized [2Fe-2S]-[ferredoxin] + NADPH. The protein operates within energy metabolism; photosynthesis. May play a key role in regulating the relative amounts of cyclic and non-cyclic electron flow to meet the demands of the plant for ATP and reducing power. The sequence is that of Ferredoxin--NADP reductase, chloroplastic (PETH) from Mesembryanthemum crystallinum (Common ice plant).